Consider the following 398-residue polypeptide: uncharacterized protein (398 aa).

The disordered stretch occupies residues 313 to 398; that stretch reads KTIKSSGSKT…TSKSIKYYEV (86 aa). Composition is skewed to low complexity over residues 314 to 333 and 343 to 398; these read TIKS…TNKS and GSKT…YYEV.

This is an uncharacterized protein from Acanthamoeba polyphaga mimivirus (APMV).